Consider the following 391-residue polypeptide: Pyoverdine export membrane fusion protein PvdR (391 aa).

The N-terminal stretch at 1–24 (MRRTRSTRRALLVAVCLSPLIALA) is a signal peptide. Positions 108 to 180 (IEMLKAQLAE…QASLRSDEAE (73 aa)) form a coiled coil. The segment at 263–289 (LPVPPKPLDQSNQGGGSPTSGSGGQSG) is disordered. The segment covering 275-289 (QGGGSPTSGSGGQSG) has biased composition (gly residues).

It belongs to the membrane fusion protein (MFP) (TC 8.A.1) family. As to quaternary structure, part of the tripartite efflux system PvdRT-OpmQ, which is composed of an inner membrane component with both ATPase and permease domains, PvdT, a periplasmic membrane fusion protein, PvdR, and an outer membrane component, OpmQ.

The protein localises to the periplasm. Part of the tripartite efflux system PvdRT-OpmQ required for the secretion into the extracellular milieu of the siderophore pyoverdine (PVD), which is involved in iron acquisition. This subunit is an adapter protein that stimulates the ATPase activity of PvdT and connects the inner and outer membrane components. The system is responsible for export of newly synthesized PVD after the final steps of biosynthesis have taken place in the periplasm. It is also responsible for recycling of PVD after internalization of ferri-PVD into the periplasm by the outer-membrane receptor FpvA and release of iron from PVD, thus making PVD available for new cycles of iron uptake. In addition, can expel unwanted metals complexed with PVD from the periplasm into the extracellular medium. Does not contribute to resistance to antibiotics belonging to the classes of tetracyclines, aminoglycosides, beta-lactams and macrolides, and chloramphenicol. The protein is Pyoverdine export membrane fusion protein PvdR of Pseudomonas aeruginosa (strain ATCC 15692 / DSM 22644 / CIP 104116 / JCM 14847 / LMG 12228 / 1C / PRS 101 / PAO1).